The chain runs to 395 residues: Putative carbonic anhydrase 1 (395 aa).

Residues 1–24 (MKLQGAGCVVAAVLGALFIVNVES) form the signal peptide. Residues 42–365 (ISYDVRSTIG…LNDRPVFLVR (324 aa)) enclose the Alpha-carbonic anhydrase domain. Zn(2+) contacts are provided by His-139, His-141, and His-165.

This sequence belongs to the alpha-carbonic anhydrase family. Requires Zn(2+) as cofactor. In terms of tissue distribution, component of the acid-insoluble and acid-soluble organic matrix of calcified layers of the shell (at protein level).

Its subcellular location is the secreted. It catalyses the reaction hydrogencarbonate + H(+) = CO2 + H2O. Its function is as follows. Reversible hydration of carbon dioxide. This is Putative carbonic anhydrase 1 from Lottia gigantea (Giant owl limpet).